The primary structure comprises 507 residues: 2,3-bisphosphoglycerate-independent phosphoglycerate mutase (507 aa).

Positions 13 and 63 each coordinate Mn(2+). Serine 63 acts as the Phosphoserine intermediate in catalysis. Substrate contacts are provided by residues histidine 122, 152-153, arginine 184, arginine 190, 256-259, and lysine 330; these read RD and RADR. Positions 397, 401, 438, 439, and 457 each coordinate Mn(2+).

Belongs to the BPG-independent phosphoglycerate mutase family. Monomer. Mn(2+) is required as a cofactor.

The catalysed reaction is (2R)-2-phosphoglycerate = (2R)-3-phosphoglycerate. It participates in carbohydrate degradation; glycolysis; pyruvate from D-glyceraldehyde 3-phosphate: step 3/5. In terms of biological role, catalyzes the interconversion of 2-phosphoglycerate and 3-phosphoglycerate. This chain is 2,3-bisphosphoglycerate-independent phosphoglycerate mutase, found in Chromobacterium violaceum (strain ATCC 12472 / DSM 30191 / JCM 1249 / CCUG 213 / NBRC 12614 / NCIMB 9131 / NCTC 9757 / MK).